A 285-amino-acid polypeptide reads, in one-letter code: MLPITVVTLFAALAAAAPASVSMEKRRVEGELVVRADAAPPAVLTELSSPVASAPAAEASKAGDAAKAGDAAKAGDAAKAGDAAKGGDAKGGDAKGGDAKGGDAKGGKGGDAKGGKGGDAAKGGKGGDAAKGGKGGDAAKGGNVRGCADLKTNGPVVEHKVVQGDTLGKLTATFQSGICNIAKENNIADPDKIDVGQVLKIPTGLCTQNVDNNSCIKAAVVNPNTDEKGTCLKTGPFTRVIKKGDSFVGIAKELGLQEQAVVDVNPGVDRFNLLPEQTINLPKCK.

An N-terminal signal peptide occupies residues 1-16; that stretch reads MLPITVVTLFAALAAA. Residues 75-143 form a disordered region; the sequence is GDAAKAGDAA…KGGDAAKGGN (69 aa). Positions 85–116 are enriched in basic and acidic residues; it reads KGGDAKGGDAKGGDAKGGDAKGGKGGDAKGGK. A compositionally biased stretch (gly residues) spans 117–139; sequence GGDAAKGGKGGDAAKGGKGGDAA. LysM domains are found at residues 157 to 201 and 237 to 281; these read VEHK…VLKI and FTRV…TINL.

The protein belongs to the secreted LysM effector family.

In terms of biological role, might have a role in sequestration of chitin oligosaccharides (breakdown products of fungal cell walls that are released during invasion and act as triggers of host immunity) to dampen host defense. The polypeptide is Secreted LysM effector slp2 (Pyricularia oryzae (strain 70-15 / ATCC MYA-4617 / FGSC 8958) (Rice blast fungus)).